The following is a 300-amino-acid chain: Cholesterol 25-hydroxylase-like protein (300 aa).

Asn-9 carries an N-linked (GlcNAc...) asparagine glycan. The next 3 helical transmembrane spans lie at 54–73, 95–115, and 130–152; these read YTWVAVFTFIDVFLCNVPFF, LQGWNQLLWIYPMALVQLIWV, and MLSQLAIFFLAFDFTYFWFHYIN. The region spanning 135 to 266 is the Fatty acid hydroxylase domain; the sequence is AIFFLAFDFT…WFNYLDRLMG (132 aa). The Histidine box-1 motif lies at 148–152; sequence FHYIN. The short motif at 163 to 167 is the Histidine box-2 element; sequence HSVHH. A helical membrane pass occupies residues 192 to 212; sequence ITTIPWIFPTHCLTYWIWFFI. The Histidine box-3 motif lies at 242–248; the sequence is AHDMHHL.

Belongs to the sterol desaturase family. The cofactor is Fe cation.

Its subcellular location is the membrane. In terms of biological role, probable sterol desaturase. This Caenorhabditis elegans protein is Cholesterol 25-hydroxylase-like protein.